The primary structure comprises 901 residues: Protein translocase subunit SecA (901 aa).

Residues Gln-85, 103–107 (GEGKT), and Asp-510 each bind ATP. Positions 848–901 (RINQNNLPVDENSQTTQNSETEDYSDRRIGRNEPCPCGSGKKYKHCHGSRVARQ) are disordered. A compositionally biased stretch (polar residues) spans 849–866 (INQNNLPVDENSQTTQNS). Residues Cys-882, Cys-884, Cys-893, and His-894 each contribute to the Zn(2+) site. Over residues 888–901 (KKYKHCHGSRVARQ) the composition is skewed to basic residues.

It belongs to the SecA family. In terms of assembly, monomer and homodimer. Part of the essential Sec protein translocation apparatus which comprises SecA, SecYEG and auxiliary proteins SecDF-YajC and YidC. Forms a complex with SecB. Requires Zn(2+) as cofactor.

The protein localises to the cell inner membrane. Its subcellular location is the cytoplasm. It catalyses the reaction ATP + H2O + cellular proteinSide 1 = ADP + phosphate + cellular proteinSide 2.. Its function is as follows. Part of the Sec protein translocase complex. Interacts with the SecYEG preprotein conducting channel. Has a central role in coupling the hydrolysis of ATP to the transfer of proteins into and across the cell membrane, serving both as a receptor for the preprotein-SecB complex and as an ATP-driven molecular motor driving the stepwise translocation of polypeptide chains across the membrane. In Haemophilus influenzae (strain ATCC 51907 / DSM 11121 / KW20 / Rd), this protein is Protein translocase subunit SecA.